Reading from the N-terminus, the 419-residue chain is Protein FAM217A (419 aa).

4 disordered regions span residues 1 to 60 (MGRK…LENP), 96 to 119 (KGST…DLSE), 236 to 299 (SSSK…SRAL), and 317 to 382 (KNSK…RTKK). A compositionally biased stretch (low complexity) spans 7 to 19 (ESCSSSLHVSSIS). A compositionally biased stretch (low complexity) spans 236-251 (SSSKAIATKAKAPKIP). 2 stretches are compositionally biased toward polar residues: residues 252-261 (ETSTLQTSGV) and 271-281 (NSGSGKPEQNV). Composition is skewed to low complexity over residues 282 to 296 (SKWS…KSNS) and 334 to 345 (PTTTTQATQPMA).

This sequence belongs to the FAM217 family.

The protein is Protein FAM217A (Fam217a) of Mus musculus (Mouse).